An 837-amino-acid polypeptide reads, in one-letter code: Striatin-interacting protein 1 (837 aa).

Met1 bears the N-acetylmethionine mark. Disordered regions lie at residues 1–66 (MEPA…SESP) and 333–423 (AASP…KGLP). Pro residues predominate over residues 18 to 35 (PQPPPPPPPATAQPPPGA). Basic and acidic residues predominate over residues 47–60 (KAREFNRNQRKDSE). Phosphoserine occurs at positions 59, 335, and 339. Basic and acidic residues predominate over residues 356–377 (KALIKQDNLDAFNERDPYKADD). Residues 378-391 (SREEEEENDDDNSL) show a composition bias toward acidic residues. Ser788 carries the phosphoserine modification. Positions 796–837 (DNCLQSVLGQRVDLPEDFQMNYDLWLEREVFSKPISWEELLQ) are required for STRIPAK core complex formation.

It belongs to the STRIP family. As to quaternary structure, part of the core of STRIPAK complexes composed of PP2A catalytic and scaffolding subunits, the striatins (PP2A regulatory subunits), the striatin-associated proteins MOB4, STRIP1 and STRIP2, PDCD10 and members of the STE20 kinases, such as STK24 and STK26. The STRIPAK complex can be extended by adapter proteins such as SLMAP:SIKE1, CTTNBP2 or CTTNBP2NL. Interacts with CDC42BPB. Interacts with CTTNBP2NL.

The protein localises to the cytoplasm. In terms of biological role, plays a role in the regulation of cell morphology and cytoskeletal organization. Required in the cortical actin filament dynamics and cell shape. Part of the striatin-interacting phosphatase and kinase (STRIPAK) complexes. STRIPAK complexes have critical roles in protein (de)phosphorylation and are regulators of multiple signaling pathways including Hippo, MAPK, nuclear receptor and cytoskeleton remodeling. Different types of STRIPAK complexes are involved in a variety of biological processes such as cell growth, differentiation, apoptosis, metabolism and immune regulation. This is Striatin-interacting protein 1 (STRIP1) from Macaca fascicularis (Crab-eating macaque).